The sequence spans 631 residues: 1-deoxy-D-xylulose-5-phosphate synthase (631 aa).

Thiamine diphosphate-binding positions include histidine 87 and 128-130; that span reads GHS. Aspartate 159 is a Mg(2+) binding site. Thiamine diphosphate-binding positions include 160-161, asparagine 188, phenylalanine 295, and glutamate 377; that span reads GA. Asparagine 188 provides a ligand contact to Mg(2+).

Belongs to the transketolase family. DXPS subfamily. In terms of assembly, homodimer. The cofactor is Mg(2+). Requires thiamine diphosphate as cofactor.

The enzyme catalyses D-glyceraldehyde 3-phosphate + pyruvate + H(+) = 1-deoxy-D-xylulose 5-phosphate + CO2. It functions in the pathway metabolic intermediate biosynthesis; 1-deoxy-D-xylulose 5-phosphate biosynthesis; 1-deoxy-D-xylulose 5-phosphate from D-glyceraldehyde 3-phosphate and pyruvate: step 1/1. Catalyzes the acyloin condensation reaction between C atoms 2 and 3 of pyruvate and glyceraldehyde 3-phosphate to yield 1-deoxy-D-xylulose-5-phosphate (DXP). The sequence is that of 1-deoxy-D-xylulose-5-phosphate synthase from Pseudomonas putida (strain W619).